A 253-amino-acid polypeptide reads, in one-letter code: DNA repair protein RecO (253 aa).

This sequence belongs to the RecO family.

Involved in DNA repair and RecF pathway recombination. The polypeptide is DNA repair protein RecO (Streptococcus agalactiae serotype Ia (strain ATCC 27591 / A909 / CDC SS700)).